The primary structure comprises 218 residues: 7-cyano-7-deazaguanine synthase (218 aa).

11 to 21 is an ATP binding site; it reads LSGGMDSATLL. Zn(2+)-binding residues include C193, C201, C204, and C207.

It belongs to the QueC family. Zn(2+) serves as cofactor.

The enzyme catalyses 7-carboxy-7-deazaguanine + NH4(+) + ATP = 7-cyano-7-deazaguanine + ADP + phosphate + H2O + H(+). The protein operates within purine metabolism; 7-cyano-7-deazaguanine biosynthesis. Its function is as follows. Catalyzes the ATP-dependent conversion of 7-carboxy-7-deazaguanine (CDG) to 7-cyano-7-deazaguanine (preQ(0)). This is 7-cyano-7-deazaguanine synthase from Aquifex aeolicus (strain VF5).